Consider the following 258-residue polypeptide: Deoxyribose-phosphate aldolase (258 aa).

Asp101 serves as the catalytic Proton donor/acceptor. The active-site Schiff-base intermediate with acetaldehyde is the Lys166. Lys200 serves as the catalytic Proton donor/acceptor.

Belongs to the DeoC/FbaB aldolase family. DeoC type 2 subfamily.

Its subcellular location is the cytoplasm. The enzyme catalyses 2-deoxy-D-ribose 5-phosphate = D-glyceraldehyde 3-phosphate + acetaldehyde. It participates in carbohydrate degradation; 2-deoxy-D-ribose 1-phosphate degradation; D-glyceraldehyde 3-phosphate and acetaldehyde from 2-deoxy-alpha-D-ribose 1-phosphate: step 2/2. Functionally, catalyzes a reversible aldol reaction between acetaldehyde and D-glyceraldehyde 3-phosphate to generate 2-deoxy-D-ribose 5-phosphate. The protein is Deoxyribose-phosphate aldolase of Haemophilus ducreyi (strain 35000HP / ATCC 700724).